A 201-amino-acid chain; its full sequence is Small ribosomal subunit protein uS4c (201 aa).

One can recognise an S4 RNA-binding domain in the interval M89–K150.

The protein belongs to the universal ribosomal protein uS4 family. Part of the 30S ribosomal subunit. Contacts protein S5. The interaction surface between S4 and S5 is involved in control of translational fidelity.

The protein localises to the plastid. The protein resides in the chloroplast. Its function is as follows. One of the primary rRNA binding proteins, it binds directly to 16S rRNA where it nucleates assembly of the body of the 30S subunit. With S5 and S12 plays an important role in translational accuracy. In Physcomitrium patens (Spreading-leaved earth moss), this protein is Small ribosomal subunit protein uS4c (rps4).